A 211-amino-acid polypeptide reads, in one-letter code: Glycerol-3-phosphate acyltransferase 2 (211 aa).

The next 5 helical transmembrane spans lie at 6-26 (FASL…VVVG), 57-77 (IIVF…PVIF), 82-102 (HYLC…PIFL), 124-144 (FFLI…MVSL), and 148-168 (ISVV…LSII).

This sequence belongs to the PlsY family. In terms of assembly, probably interacts with PlsX.

The protein resides in the cell membrane. The enzyme catalyses an acyl phosphate + sn-glycerol 3-phosphate = a 1-acyl-sn-glycero-3-phosphate + phosphate. Its pathway is lipid metabolism; phospholipid metabolism. In terms of biological role, catalyzes the transfer of an acyl group from acyl-phosphate (acyl-PO(4)) to glycerol-3-phosphate (G3P) to form lysophosphatidic acid (LPA). This enzyme utilizes acyl-phosphate as fatty acyl donor, but not acyl-CoA or acyl-ACP. The polypeptide is Glycerol-3-phosphate acyltransferase 2 (Lactobacillus acidophilus (strain ATCC 700396 / NCK56 / N2 / NCFM)).